A 520-amino-acid polypeptide reads, in one-letter code: Non-structural protein PNS7 (520 aa).

This is Non-structural protein PNS7 (S6) from Catharanthus roseus (Madagascar periwinkle).